A 308-amino-acid chain; its full sequence is Probable manganese-dependent inorganic pyrophosphatase (308 aa).

Mn(2+)-binding residues include His-9, Asp-13, Asp-15, Asp-75, His-97, and Asp-149.

The protein belongs to the PPase class C family. Requires Mn(2+) as cofactor.

Its subcellular location is the cytoplasm. The enzyme catalyses diphosphate + H2O = 2 phosphate + H(+). The sequence is that of Probable manganese-dependent inorganic pyrophosphatase from Listeria innocua serovar 6a (strain ATCC BAA-680 / CLIP 11262).